Reading from the N-terminus, the 193-residue chain is Putative manganese efflux pump MntP (193 aa).

Transmembrane regions (helical) follow at residues 6-26 (LLGL…AVGI), 41-61 (YHFG…GTGI), 65-85 (TQSY…ANMI), 107-127 (LIIL…SLSM), 132-152 (IWYP…FGML), and 169-189 (VLGG…NGVF).

It belongs to the MntP (TC 9.B.29) family.

It localises to the cell inner membrane. In terms of biological role, probably functions as a manganese efflux pump. This is Putative manganese efflux pump MntP from Desulfotalea psychrophila (strain LSv54 / DSM 12343).